A 255-amino-acid chain; its full sequence is uncharacterized protein (255 aa).

This is an uncharacterized protein from Pseudomonas chlororaphis (Pseudomonas aureofaciens).